The following is a 99-amino-acid chain: UPF0213 protein PC1_0597 (99 aa).

Residues 8 to 83 (PQWYLYILRT…KQLSKNQKER (76 aa)) enclose the GIY-YIG domain.

The protein belongs to the UPF0213 family.

The chain is UPF0213 protein PC1_0597 from Pectobacterium carotovorum subsp. carotovorum (strain PC1).